A 300-amino-acid chain; its full sequence is C-4 methylsterol oxidase erg25 (300 aa).

Positions 140–276 constitute a Fatty acid hydroxylase domain; the sequence is TLFFFLEDTW…FRWWDAVLKT (137 aa). The short motif at 154–158 is the Histidine box-1 element; the sequence is HRLFH. The Histidine box-2 signature appears at 167-171; sequence HKVHH. Residues 186 to 206 traverse the membrane as a helical segment; the sequence is PLEIILLGAGTVFVPLMWCYF. Residues 251 to 257 carry the Histidine box-3 motif; sequence HHDYHHM.

The protein belongs to the sterol desaturase family. As to quaternary structure, heterotetramer of erg25, erg26, erg27 and erg28. Erg28 acts as a scaffold to tether erg27 and other 4,4-demethylation-related enzymes, forming a demethylation enzyme complex, in the endoplasmic reticulum. Fe cation serves as cofactor.

The protein localises to the endoplasmic reticulum membrane. The catalysed reaction is 4,4-dimethyl-5alpha-cholesta-8,24-dien-3beta-ol + 6 Fe(II)-[cytochrome b5] + 3 O2 + 5 H(+) = 4beta-methylzymosterol-4alpha-carboxylate + 6 Fe(III)-[cytochrome b5] + 4 H2O. The enzyme catalyses 4alpha-methylzymosterol + 6 Fe(II)-[cytochrome b5] + 3 O2 + 5 H(+) = 4alpha-carboxyzymosterol + 6 Fe(III)-[cytochrome b5] + 4 H2O. It participates in steroid biosynthesis; zymosterol biosynthesis; zymosterol from lanosterol: step 3/6. It functions in the pathway steroid metabolism; ergosterol biosynthesis. In terms of biological role, C-4 methylsterol oxidase; part of the third module of ergosterol biosynthesis pathway that includes by the late steps of the pathway. Erg25 is a catalytic component of the C-4 demethylation complex that catalyzes the three-step monooxygenation required for the demethylation of 4,4-dimethyl and 4alpha-methylsterols. The third module or late pathway involves the ergosterol synthesis itself through consecutive reactions that mainly occur in the endoplasmic reticulum (ER) membrane. Firstly, the squalene synthase erg9 catalyzes the condensation of 2 farnesyl pyrophosphate moieties to form squalene, which is the precursor of all steroids. Secondly, squalene is converted into lanosterol by the consecutive action of the squalene epoxidase erg1 and the lanosterol synthase erg7. The lanosterol 14-alpha-demethylase erg11/cyp1 catalyzes C14-demethylation of lanosterol to produce 4,4'-dimethyl cholesta-8,14,24-triene-3-beta-ol. In the next steps, a complex process involving various demethylation, reduction and desaturation reactions catalyzed by the C-14 reductase erg24 and the C-4 demethylation complex erg25-erg26-erg27 leads to the production of zymosterol. Erg28 likely functions in the C-4 demethylation complex reaction by tethering erg26 and Erg27 to the endoplasmic reticulum or to facilitate interaction between these proteins. Then, the sterol 24-C-methyltransferase erg6 catalyzes the methyl transfer from S-adenosyl-methionine to the C-24 of zymosterol to form fecosterol. The C-8 sterol isomerase erg2 catalyzes the reaction which results in unsaturation at C-7 in the B ring of sterols and thus converts fecosterol to episterol. The sterol-C5-desaturases erg31 and erg32 then catalyze the introduction of a C-5 double bond in the B ring to produce 5-dehydroepisterol. The C-22 sterol desaturase erg5 further converts 5-dehydroepisterol into ergosta-5,7,22,24(28)-tetraen-3beta-ol by forming the C-22(23) double bond in the sterol side chain. Finally, ergosta-5,7,22,24(28)-tetraen-3beta-ol is substrate of the C-24(28) sterol reductase erg4 to produce ergosterol. In the genus Schizosaccharomyces, a second route exists between lanosterol and fecosterol, via the methylation of lanosterol to eburicol by erg6, followed by C14-demethylation by erg11/cyp1 and C4-demethylation by the demethylation complex erg25-erg26-erg27. The polypeptide is C-4 methylsterol oxidase erg25 (Schizosaccharomyces pombe (strain 972 / ATCC 24843) (Fission yeast)).